Consider the following 178-residue polypeptide: MVTRRLSTNVHIDLQPIRQGILLPFHDRPAEMRDLAKCNDQFFRNVRDTISEPKFTQLMELWLEKSRAEVPDADFLMTTRNIMLSFPSNEEQGHQRSASHGSTSSATSTPKRLSISSMDPARIHLWRQFCNVVGYDMPTPGEQKEAPPSPAQEAIPESPVEEAIASDSDEEEEEEIKA.

2 disordered regions span residues 89 to 115 (NEEQGHQRSASHGSTSSATSTPKRLSI) and 136 to 178 (DMPT…EIKA). Low complexity predominate over residues 98 to 109 (ASHGSTSSATST). The segment covering 167–178 (DSDEEEEEEIKA) has biased composition (acidic residues).

The protein resides in the cytoplasm. It is found in the nucleus. This is an uncharacterized protein from Schizosaccharomyces pombe (strain 972 / ATCC 24843) (Fission yeast).